A 132-amino-acid chain; its full sequence is Small ribosomal subunit protein uS13 (132 aa).

The span at R101–A125 shows a compositional bias: basic residues. Residues R101–R132 form a disordered region.

This sequence belongs to the universal ribosomal protein uS13 family. In terms of assembly, part of the 30S ribosomal subunit. Forms a loose heterodimer with protein S19. Forms two bridges to the 50S subunit in the 70S ribosome.

Functionally, located at the top of the head of the 30S subunit, it contacts several helices of the 16S rRNA. In the 70S ribosome it contacts the 23S rRNA (bridge B1a) and protein L5 of the 50S subunit (bridge B1b), connecting the 2 subunits; these bridges are implicated in subunit movement. Contacts the tRNAs in the A and P-sites. The sequence is that of Small ribosomal subunit protein uS13 from Ureaplasma parvum serovar 3 (strain ATCC 27815 / 27 / NCTC 11736).